Consider the following 708-residue polypeptide: Serine/threonine-protein kinase Nek5 (708 aa).

Positions 4–259 constitute a Protein kinase domain; it reads YDVIKAIGQG…INSILKRPFL (256 aa). Residues 10-18 and Lys33 contribute to the ATP site; that span reads IGQGAFGKA. Asp128 acts as the Proton acceptor in catalysis. Disordered regions lie at residues 376–403 and 423–454; these read SYHP…PSQW and KQLG…FQEL. Basic and acidic residues predominate over residues 440 to 454; that stretch reads QELRSNGEEPRFQEL.

This sequence belongs to the protein kinase superfamily. NEK Ser/Thr protein kinase family. NIMA subfamily. Requires Mg(2+) as cofactor.

It is found in the cell projection. It localises to the cilium. The protein localises to the flagellum. It catalyses the reaction L-seryl-[protein] + ATP = O-phospho-L-seryl-[protein] + ADP + H(+). It carries out the reaction L-threonyl-[protein] + ATP = O-phospho-L-threonyl-[protein] + ADP + H(+). This chain is Serine/threonine-protein kinase Nek5 (NEK5), found in Homo sapiens (Human).